We begin with the raw amino-acid sequence, 363 residues long: Mannose-1-phosphate guanyltransferase (363 aa).

The protein belongs to the transferase hexapeptide repeat family.

The protein resides in the cytoplasm. It carries out the reaction alpha-D-mannose 1-phosphate + GTP + H(+) = GDP-alpha-D-mannose + diphosphate. It participates in nucleotide-sugar biosynthesis; GDP-alpha-D-mannose biosynthesis; GDP-alpha-D-mannose from alpha-D-mannose 1-phosphate (GTP route): step 1/1. In terms of biological role, involved in cell wall synthesis where it is required for glycosylation. Involved in cell cycle progression through cell-size checkpoint. This Yarrowia lipolytica (strain CLIB 122 / E 150) (Yeast) protein is Mannose-1-phosphate guanyltransferase (MPG1).